We begin with the raw amino-acid sequence, 265 residues long: Phosphatidylglycerol--prolipoprotein diacylglyceryl transferase (265 aa).

The next 4 helical transmembrane spans lie at 17–37, 56–76, 92–112, and 117–137; these read LSIR…WLLG, LVTY…MLFY, WQGG…VWFF, and GKGF…GLFA. Arg-139 provides a ligand contact to a 1,2-diacyl-sn-glycero-3-phospho-(1'-sn-glycerol). A run of 3 helical transmembrane segments spans residues 173 to 193, 201 to 221, and 235 to 255; these read PSQL…VWLY, GAVS…VELV, and WLTM…WLLA.

It belongs to the Lgt family.

The protein resides in the cell inner membrane. It carries out the reaction L-cysteinyl-[prolipoprotein] + a 1,2-diacyl-sn-glycero-3-phospho-(1'-sn-glycerol) = an S-1,2-diacyl-sn-glyceryl-L-cysteinyl-[prolipoprotein] + sn-glycerol 1-phosphate + H(+). The protein operates within protein modification; lipoprotein biosynthesis (diacylglyceryl transfer). In terms of biological role, catalyzes the transfer of the diacylglyceryl group from phosphatidylglycerol to the sulfhydryl group of the N-terminal cysteine of a prolipoprotein, the first step in the formation of mature lipoproteins. This is Phosphatidylglycerol--prolipoprotein diacylglyceryl transferase from Solidesulfovibrio magneticus (strain ATCC 700980 / DSM 13731 / RS-1) (Desulfovibrio magneticus).